Here is a 113-residue protein sequence, read N- to C-terminus: Large ribosomal subunit protein uL24 (113 aa).

It belongs to the universal ribosomal protein uL24 family. Part of the 50S ribosomal subunit.

One of two assembly initiator proteins, it binds directly to the 5'-end of the 23S rRNA, where it nucleates assembly of the 50S subunit. Functionally, one of the proteins that surrounds the polypeptide exit tunnel on the outside of the subunit. The polypeptide is Large ribosomal subunit protein uL24 (rplX) (Fusobacterium nucleatum subsp. nucleatum (strain ATCC 25586 / DSM 15643 / BCRC 10681 / CIP 101130 / JCM 8532 / KCTC 2640 / LMG 13131 / VPI 4355)).